The sequence spans 213 residues: Ras-related protein Rab-2 (213 aa).

GTP-binding residues include T15, G16, G18, K19, S20, C21, Q32, P33, H35, T38, G64, N119, D122, and A150. S20 contacts Mg(2+). Residue T38 coordinates Mg(2+). Residues Q190 to C213 form a disordered region. 2 S-geranylgeranyl cysteine lipidation sites follow: C212 and C213.

The protein belongs to the small GTPase superfamily. Rab family. Interacts (GTP-bound form) with Vps16A and Vps39; the interaction with Vps39 is probably direct.

The protein resides in the vesicle. It localises to the cytoplasmic vesicle. Its subcellular location is the cell projection. The protein localises to the axon. It is found in the presynapse. The protein resides in the presynaptic active zone. It localises to the golgi apparatus. Its subcellular location is the trans-Golgi network. The protein localises to the perikaryon. It is found in the autophagosome membrane. The protein resides in the autolysosome membrane. The catalysed reaction is GTP + H2O = GDP + phosphate + H(+). In terms of biological role, may be involved in bidirectional endoplasmic reticulum (ER) to Golgi trafficking. Together with Rab7 involved in promoting fusion of autophagosomes and endosomes with lysosomes, probably through recruitment of the HOPS tethering complex. Involved in biosynthetic transport to lysosomes. In larval motor neurons, mediates the biogenesis of presynaptic cargo vesicles and their long-range axonal trafficking to synaptic termini. Not involved in axonal trafficking of mitochondria. During vesicle biogenesis, active zone proteins (including brp/Bruchpilot) and synaptic vesicle proteins (including VGlut) are sorted from the trans-Golgi in a Rab2-dependent manner via, at least, two independent routes. Acts upstream of Arl8 during presynaptic precursor vesicle biogenesis. Associated with lysosomal marker positive presynaptic cargo vesicles during anterograde and retrograde axonal trafficking, probably while in its GTP-bound active state. Involved in the delivery of presynaptic cargos, but not presynapse assembly or active zone function at synaptic termini. Required for autophagocytosis-dependent remodeling of myofibrils and transverse-tubules (T-tubules) during metamorphosis. This chain is Ras-related protein Rab-2, found in Drosophila melanogaster (Fruit fly).